Here is a 152-residue protein sequence, read N- to C-terminus: Transcriptional regulator MraZ (152 aa).

SpoVT-AbrB domains follow at residues 5–52 and 81–124; these read ATMV…PLPE and ASEC…DEQT.

Belongs to the MraZ family. Forms oligomers.

It is found in the cytoplasm. The protein localises to the nucleoid. Functionally, negatively regulates its own expression and that of the subsequent genes in the proximal part of the division and cell wall (dcw) gene cluster. Acts by binding directly to DNA. May also regulate the expression of genes outside the dcw cluster. This Serratia proteamaculans (strain 568) protein is Transcriptional regulator MraZ.